The primary structure comprises 206 residues: MSLRRRTLLKVIVLGDTGVGKTSLMNQYVHKKFSQQYKATIGADFVTKELQIDDRLVTLQIWDTAGQERFQSLGVAFYRGADCCVLAYDVNVMKSFDTLDNWHEEFLKQANPPDPRSFPFILLGNKIDIDGGNSRVVSEKKAKDWCASKGNIPYFETSAKEDFNVDAAFLCIAKAALANEHEQDIYFQGIPEAAVPENEQRSGCAC.

GTP contacts are provided by residues 15–22, 63–67, and 125–128; these read GDTGVGKT, DTAGQ, and NKID. Residues cysteine 204 and cysteine 206 are each lipidated (S-geranylgeranyl cysteine). Cysteine 206 carries the post-translational modification Cysteine methyl ester.

Belongs to the small GTPase superfamily. Rab family.

It is found in the cell membrane. Its function is as follows. Protein transport. Probably involved in vesicular traffic. The polypeptide is Ras-related protein Rab7 (Vigna aconitifolia (Moth bean)).